A 90-amino-acid chain; its full sequence is UPF0297 protein OEOE_1166 (90 aa).

This sequence belongs to the UPF0297 family.

The sequence is that of UPF0297 protein OEOE_1166 from Oenococcus oeni (strain ATCC BAA-331 / PSU-1).